Reading from the N-terminus, the 555-residue chain is Serine/threonine-protein kinase Nek4 (555 aa).

Residues 4–258 form the Protein kinase domain; the sequence is YEVLEQIGKG…ANELLNHPHL (255 aa). Residues 10–18 and Lys33 contribute to the ATP site; that span reads IGKGSFGSA. Asp129 functions as the Proton acceptor in the catalytic mechanism. Disordered regions lie at residues 288–328, 346–372, and 443–477; these read LKER…MFNG, QRQE…KAST, and NRET…ITKD. Positions 304–320 are enriched in polar residues; that stretch reads PSVSDTEAGSVSSSGKA.

This sequence belongs to the protein kinase superfamily. NEK Ser/Thr protein kinase family. NIMA subfamily.

The enzyme catalyses L-seryl-[protein] + ATP = O-phospho-L-seryl-[protein] + ADP + H(+). It catalyses the reaction L-threonyl-[protein] + ATP = O-phospho-L-threonyl-[protein] + ADP + H(+). May be involved in plant development processes. This is Serine/threonine-protein kinase Nek4 (NEK4) from Arabidopsis thaliana (Mouse-ear cress).